The chain runs to 92 residues: Small ribosomal subunit protein uS19 (92 aa).

The protein belongs to the universal ribosomal protein uS19 family.

Functionally, protein S19 forms a complex with S13 that binds strongly to the 16S ribosomal RNA. This Treponema denticola (strain ATCC 35405 / DSM 14222 / CIP 103919 / JCM 8153 / KCTC 15104) protein is Small ribosomal subunit protein uS19.